The following is a 153-amino-acid chain: 6,7-dimethyl-8-ribityllumazine synthase (153 aa).

Residues tryptophan 22, 56–58, and 80–82 each bind 5-amino-6-(D-ribitylamino)uracil; these read SYE and AVI. 85-86 provides a ligand contact to (2S)-2-hydroxy-3-oxobutyl phosphate; the sequence is AT. The Proton donor role is filled by histidine 88. 5-amino-6-(D-ribitylamino)uracil is bound at residue leucine 113. Arginine 127 lines the (2S)-2-hydroxy-3-oxobutyl phosphate pocket.

It belongs to the DMRL synthase family.

It carries out the reaction (2S)-2-hydroxy-3-oxobutyl phosphate + 5-amino-6-(D-ribitylamino)uracil = 6,7-dimethyl-8-(1-D-ribityl)lumazine + phosphate + 2 H2O + H(+). Its pathway is cofactor biosynthesis; riboflavin biosynthesis; riboflavin from 2-hydroxy-3-oxobutyl phosphate and 5-amino-6-(D-ribitylamino)uracil: step 1/2. Catalyzes the formation of 6,7-dimethyl-8-ribityllumazine by condensation of 5-amino-6-(D-ribitylamino)uracil with 3,4-dihydroxy-2-butanone 4-phosphate. This is the penultimate step in the biosynthesis of riboflavin. The sequence is that of 6,7-dimethyl-8-ribityllumazine synthase from Herpetosiphon aurantiacus (strain ATCC 23779 / DSM 785 / 114-95).